The primary structure comprises 128 residues: Azurin (128 aa).

Positions 1 to 128 (AECKVDVDST…SMMKGAVVLK (128 aa)) constitute a Plastocyanin-like domain. A disulfide bridge links Cys3 with Cys26. His46, Cys112, His117, and Met121 together coordinate Cu cation.

The protein resides in the periplasm. Its function is as follows. Transfers electrons from cytochrome c551 to cytochrome oxidase. This is Azurin from Pseudomonas chlororaphis (Pseudomonas aureofaciens).